A 297-amino-acid polypeptide reads, in one-letter code: UDP-N-acetylenolpyruvoylglucosamine reductase (297 aa).

The FAD-binding PCMH-type domain occupies 24–189; that stretch reads KVGGNAEIFF…LKAIFKVNKG (166 aa). The active site involves Arg-169. Catalysis depends on Ser-218, which acts as the Proton donor. The active site involves Glu-289.

It belongs to the MurB family. Requires FAD as cofactor.

Its subcellular location is the cytoplasm. The catalysed reaction is UDP-N-acetyl-alpha-D-muramate + NADP(+) = UDP-N-acetyl-3-O-(1-carboxyvinyl)-alpha-D-glucosamine + NADPH + H(+). It functions in the pathway cell wall biogenesis; peptidoglycan biosynthesis. Functionally, cell wall formation. This is UDP-N-acetylenolpyruvoylglucosamine reductase from Rickettsia canadensis (strain McKiel).